An 84-amino-acid chain; its full sequence is uncharacterized protein (84 aa).

This is an uncharacterized protein from Vaccinia virus (strain Copenhagen) (VACV).